We begin with the raw amino-acid sequence, 256 residues long: uncharacterized protein (256 aa).

An N-terminal signal peptide occupies residues Met-1 to Ser-22. A lipid anchor (N-palmitoyl cysteine) is attached at Cys-23. Cys-23 carries the S-diacylglycerol cysteine lipid modification.

The protein belongs to the staphylococcal tandem lipoprotein family.

It is found in the cell membrane. This is an uncharacterized protein from Staphylococcus aureus (strain MRSA252).